Here is a 275-residue protein sequence, read N- to C-terminus: Pyridoxal phosphate homeostasis protein (275 aa).

Phosphoserine is present on serine 6. The residue at position 47 (lysine 47) is an N6-(pyridoxal phosphate)lysine. Tyrosine 69 carries the phosphotyrosine modification. N6-succinyllysine is present on lysine 125. Phosphoserine is present on residues serine 226 and serine 244. The segment covering 251 to 263 has biased composition (basic and acidic residues); that stretch reads DYSKKPTPDKCAA. The interval 251–275 is disordered; that stretch reads DYSKKPTPDKCAADVKAPLEVAQEH.

Belongs to the pyridoxal phosphate-binding protein YggS/PROSC family. In terms of tissue distribution, ubiquitous.

Pyridoxal 5'-phosphate (PLP)-binding protein, which may be involved in intracellular homeostatic regulation of pyridoxal 5'-phosphate (PLP), the active form of vitamin B6. The polypeptide is Pyridoxal phosphate homeostasis protein (Homo sapiens (Human)).